The chain runs to 125 residues: 14 kDa phosphohistidine phosphatase (125 aa).

N-acetylalanine is present on Ala2. Residue Lys21 coordinates substrate. Residue His53 is the Proton acceptor of the active site. 94–96 (SMG) serves as a coordination point for substrate.

As to quaternary structure, monomer.

The protein resides in the cytoplasm. It carries out the reaction N(pros)-phospho-L-histidyl-[protein] + H2O = L-histidyl-[protein] + phosphate. The catalysed reaction is N(tele)-phospho-L-histidyl-[protein] + H2O = L-histidyl-[protein] + phosphate. Functionally, exhibits phosphohistidine phosphatase activity. May have a significant involvement in neuronal signaling. The sequence is that of 14 kDa phosphohistidine phosphatase (PHPT1) from Oryctolagus cuniculus (Rabbit).